The chain runs to 276 residues: Ribosomal RNA small subunit methyltransferase A (276 aa).

The S-adenosyl-L-methionine site is built by Asn-27, Leu-29, Gly-54, Glu-75, Asp-101, and Asn-123.

It belongs to the class I-like SAM-binding methyltransferase superfamily. rRNA adenine N(6)-methyltransferase family. RsmA subfamily.

It is found in the cytoplasm. It carries out the reaction adenosine(1518)/adenosine(1519) in 16S rRNA + 4 S-adenosyl-L-methionine = N(6)-dimethyladenosine(1518)/N(6)-dimethyladenosine(1519) in 16S rRNA + 4 S-adenosyl-L-homocysteine + 4 H(+). Its function is as follows. Specifically dimethylates two adjacent adenosines (A1518 and A1519) in the loop of a conserved hairpin near the 3'-end of 16S rRNA in the 30S particle. May play a critical role in biogenesis of 30S subunits. In Bartonella quintana (strain Toulouse) (Rochalimaea quintana), this protein is Ribosomal RNA small subunit methyltransferase A.